Consider the following 303-residue polypeptide: Cysteine synthase B (303 aa).

Lys-41 carries the post-translational modification N6-(pyridoxal phosphate)lysine. Pyridoxal 5'-phosphate-binding positions include Asn-71, 174–178 (GTTGT), and Ser-255.

This sequence belongs to the cysteine synthase/cystathionine beta-synthase family. It depends on pyridoxal 5'-phosphate as a cofactor.

The catalysed reaction is O-acetyl-L-serine + hydrogen sulfide = L-cysteine + acetate. The protein operates within amino-acid biosynthesis; L-cysteine biosynthesis; L-cysteine from L-serine: step 2/2. In terms of biological role, two cysteine synthase enzymes are found. Both catalyze the same reaction. Cysteine synthase B can also use thiosulfate in place of sulfide to give cysteine thiosulfonate as a product. In Salmonella typhimurium (strain LT2 / SGSC1412 / ATCC 700720), this protein is Cysteine synthase B (cysM).